The following is a 162-amino-acid chain: Nucleotide-binding protein SCO4614 (162 aa).

It belongs to the YajQ family.

The protein localises to the cytoplasm. The protein resides in the nucleoid. Its function is as follows. Nucleotide-binding protein. This chain is Nucleotide-binding protein SCO4614, found in Streptomyces coelicolor (strain ATCC BAA-471 / A3(2) / M145).